The sequence spans 354 residues: DNA ligase C2 (354 aa).

Lys-29 acts as the N6-AMP-lysine intermediate in catalysis.

It belongs to the ATP-dependent DNA ligase family.

It carries out the reaction ATP + (deoxyribonucleotide)n-3'-hydroxyl + 5'-phospho-(deoxyribonucleotide)m = (deoxyribonucleotide)n+m + AMP + diphosphate.. DNA ligase that seals nicks in double-stranded DNA during DNA replication, DNA recombination and DNA repair. Has weak intrinsic nick joining activities and accumulates DNA-adenylate. Acts as a backup for LigD in the Ku-LigD-dependent NHEJ pathway. The polypeptide is DNA ligase C2 (ligC2) (Mycolicibacterium smegmatis (strain ATCC 700084 / mc(2)155) (Mycobacterium smegmatis)).